The chain runs to 444 residues: Homogentisate 1,2-dioxygenase (444 aa).

The active-site Proton acceptor is His-298. Fe cation contacts are provided by His-341 and Glu-347. The homogentisate site is built by Tyr-356 and His-377. Fe cation is bound at residue His-377.

Belongs to the homogentisate dioxygenase family. As to quaternary structure, hexamer; dimer of trimers. The cofactor is Fe cation.

The enzyme catalyses homogentisate + O2 = 4-maleylacetoacetate + H(+). The protein operates within amino-acid degradation; L-phenylalanine degradation; acetoacetate and fumarate from L-phenylalanine: step 4/6. In terms of biological role, involved in the catabolism of homogentisate (2,5-dihydroxyphenylacetate or 2,5-OH-PhAc), a central intermediate in the degradation of phenylalanine and tyrosine. Catalyzes the oxidative ring cleavage of the aromatic ring of homogentisate to yield maleylacetoacetate. The polypeptide is Homogentisate 1,2-dioxygenase (Burkholderia ambifaria (strain ATCC BAA-244 / DSM 16087 / CCUG 44356 / LMG 19182 / AMMD) (Burkholderia cepacia (strain AMMD))).